A 111-amino-acid chain; its full sequence is ESGGGLVQPGGSMKLSCVASGFTFSNYWMNWVRQSPEKGLEWVAEIRLKSGYATHYAESVKGRFTISRDDSKSSVYLQMNNLRAEDTGIYYCTRPGVPDYWGQGTTLTVSS.

The 110-residue stretch at 1-110 (ESGGGLVQPG…WGQGTTLTVS (110 aa)) folds into the Ig-like domain.

This is Ig heavy chain V-III region HPC76 from Mus musculus (Mouse).